Here is a 250-residue protein sequence, read N- to C-terminus: Large ribosomal subunit protein uL29m (250 aa).

Residues 1–24 constitute a mitochondrion transit peptide; that stretch reads MRPGAASIRTTGSVLAFLVPSAQC. The interval 66-86 is disordered; sequence VLSKKGSGDQPPKPVPITEKV.

Belongs to the universal ribosomal protein uL29 family. Component of the mitochondrial large ribosomal subunit. Mature mitochondrial ribosomes consist of a small (37S) and a large (54S) subunit. The 37S subunit contains at least 33 different proteins and 1 molecule of RNA (15S). The 54S subunit contains at least 45 different proteins and 1 molecule of RNA (21S).

The protein localises to the mitochondrion. This chain is Large ribosomal subunit protein uL29m (MRPL4), found in Phaeosphaeria nodorum (strain SN15 / ATCC MYA-4574 / FGSC 10173) (Glume blotch fungus).